The primary structure comprises 65 residues: Potassium channel toxin kappa-KTx 2.6 (65 aa).

The N-terminal stretch at 1–27 (MKTSKMICAFLLVLVVGTFNDISGAYG) is a signal peptide. Positions 28 to 39 (EYVEDQHSFKIE) are excised as a propeptide. Intrachain disulfides connect C45–C63 and C49–C59.

This sequence belongs to the short scorpion toxin superfamily. Potassium channel inhibitor kappa-KTx family. Kappa-KTx 2 subfamily. Expressed by the venom gland.

It localises to the secreted. Its function is as follows. Potassium channel inhibitor (Kv). This Opisthacanthus cayaporum (South American scorpion) protein is Potassium channel toxin kappa-KTx 2.6.